A 366-amino-acid chain; its full sequence is Nodulation protein NolL (366 aa).

9 consecutive transmembrane segments (helical) span residues 27–47 (FVKG…LVIY), 62–82 (IYMF…SGTI), 98–118 (LLIP…AAFF), 140–160 (FLWA…FNLL), 164–184 (ILCA…IVPL), 212–232 (HKSL…LDWG), 253–273 (VLLM…SLFH), 286–306 (LVAV…GAVF), and 324–344 (IVVA…VLWI).

The protein belongs to the acyltransferase 3 family.

It localises to the cell membrane. Thought to be an acetyltransferase that modifies the fucose of the nod factor. The protein is Nodulation protein NolL (nolL) of Sinorhizobium fredii (strain NBRC 101917 / NGR234).